The sequence spans 215 residues: Probable serine/threonine-protein kinase 2 (215 aa).

Residues 1–205 (MKPEQLVYLN…WLLKEMEQLL (205 aa)) enclose the Protein kinase domain.

This sequence belongs to the protein kinase superfamily. Ser/Thr protein kinase family. Interacts with the kinase domain of host EIF2AK2.

The protein resides in the host cytoplasm. It carries out the reaction L-seryl-[protein] + ATP = O-phospho-L-seryl-[protein] + ADP + H(+). It catalyses the reaction L-threonyl-[protein] + ATP = O-phospho-L-threonyl-[protein] + ADP + H(+). Functionally, plays a role in the inhibition of host eIF2alpha/EIF2S1 phosphorylation, thereby increasing viral fitness. In the insect host, targets the endogenous insect heme-regulated inhibitor (HRI)-like eIF2alpha kinase. This Autographa californica nuclear polyhedrosis virus (AcMNPV) protein is Probable serine/threonine-protein kinase 2 (PK2).